The chain runs to 215 residues: Protein C' (215 aa).

Disordered regions lie at residues 12-34 and 51-71; these read MPSF…SRSR and SEGT…QALP. An involved in self-degradation and in host STAT1 degradation region spans residues 15–22; the sequence is FLKKILKL. A compositionally biased stretch (polar residues) spans 51–65; sequence SEGTEAGSTTPSTLP.

This sequence belongs to the respirovirus protein C family. As to quaternary structure, the different isoforms interact (via C-terminus) with unphosphorylated and phosphorylated human STAT1 (via N-terminus), favoring the formation of parallel STAT1 homodimers. The different isoforms do not interact with host STAT2. C protein interacts with L protein; this interaction has an inhibitory effect on viral transcription and replication. Post-translationally, Y1 and Y2 proteins are produced not only by alternative initiation, but also by proteolytic cleavage of C'. Only alternative initiation is detected in vitro, whereas in vivo cleavage seems to be predominant.

It localises to the host cytoplasm. The different products prevent the establishment of cellular antiviral state by blocking the interferon-alpha/beta (IFN-alpha/beta) and IFN-gamma signaling pathways. They inhibit IFN-alpha/beta induced tyrosine phosphorylation of STAT1 and STAT2. Blocking the IFN-alpha/beta pathway requires binding to STAT1 in the cytoplasm. They inhibit IFN-gamma induced serine phosphorylation of STAT1. Block the IFN-gamma pathway by binding to and stabilizing the parallel form of the STAT1 dimer, further inducing high-molecular-weight complex formation and inhibition of transcription by IFN-gamma. May also have a role in preventing the cell to enter apoptosis. Modulate regulation of viral transcription and replication. Overexpression inhibits the viral RNA polymerase. The absence of all C', C, Y1 and Y2 proteins leads to viral delayed growth. Plays an important role in virion particles release. Modulates virion shape. The chain is Protein C' (P/V/C) from Sendai virus (strain Harris) (SeV).